The following is a 239-amino-acid chain: Sugar fermentation stimulation protein homolog (239 aa).

Belongs to the SfsA family.

This Methylobacterium sp. (strain 4-46) protein is Sugar fermentation stimulation protein homolog.